We begin with the raw amino-acid sequence, 268 residues long: Tryptophan synthase alpha chain (268 aa).

Active-site proton acceptor residues include Glu49 and Asp60.

It belongs to the TrpA family. Tetramer of two alpha and two beta chains.

It catalyses the reaction (1S,2R)-1-C-(indol-3-yl)glycerol 3-phosphate + L-serine = D-glyceraldehyde 3-phosphate + L-tryptophan + H2O. It participates in amino-acid biosynthesis; L-tryptophan biosynthesis; L-tryptophan from chorismate: step 5/5. Functionally, the alpha subunit is responsible for the aldol cleavage of indoleglycerol phosphate to indole and glyceraldehyde 3-phosphate. The protein is Tryptophan synthase alpha chain of Dechloromonas aromatica (strain RCB).